Consider the following 52-residue polypeptide: Lysis protein for colicin N (52 aa).

An N-terminal signal peptide occupies residues 1–17 (MCGKILLILFFIMTLSA). Residue Cys-18 is the site of N-palmitoyl cysteine attachment. Residue Cys-18 is the site of S-diacylglycerol cysteine attachment.

The protein localises to the cell outer membrane. Lysis proteins are required for both colicin release and partial cell lysis. This is Lysis protein for colicin N (cnl) from Escherichia coli.